The following is a 397-amino-acid chain: ATP-dependent RNA helicase eIF4A (397 aa).

The Q motif signature appears at 23–51; that stretch reads YKFDDLNLKPNIVRGIFGYGYETPSAIQQ. The 171-residue stretch at 54-224 folds into the Helicase ATP-binding domain; sequence ILPITEGRDV…TKFMNNPVRI (171 aa). An ATP-binding site is contributed by 67 to 74; sequence AQSGTGKT. Positions 172–175 match the DEAD box motif; it reads DEAD. The Helicase C-terminal domain occupies 255-396; the sequence is DLYDSISVTQ…EMPADIGSLF (142 aa).

This sequence belongs to the DEAD box helicase family. eIF4A subfamily. As to quaternary structure, component of the eIF4F complex, which composition varies with external and internal environmental conditions. It is composed of at least eIF4A, eIF4E and eIF4G.

It is found in the cytoplasm. The catalysed reaction is ATP + H2O = ADP + phosphate + H(+). In terms of biological role, ATP-dependent RNA helicase which is a subunit of the eIF4F complex involved in cap recognition and is required for mRNA binding to ribosome. In the current model of translation initiation, eIF4A unwinds RNA secondary structures in the 5'-UTR of mRNAs which is necessary to allow efficient binding of the small ribosomal subunit, and subsequent scanning for the initiator codon. This Lodderomyces elongisporus (strain ATCC 11503 / CBS 2605 / JCM 1781 / NBRC 1676 / NRRL YB-4239) (Yeast) protein is ATP-dependent RNA helicase eIF4A (TIF1).